Reading from the N-terminus, the 551-residue chain is Prunin 1 Pru du 6 (551 aa).

The first 20 residues, 1 to 20 (MAKAFVFSLCLLLVFNGCLA), serve as a signal peptide directing secretion. 2 disulfides stabilise this stretch: Cys32/Cys65 and Cys108/Cys374. The Cupin type-1 1 domain occupies 37–312 (LQAREPDNRI…ALNVNEETAR (276 aa)). Disordered regions lie at residues 111–194 (TFEE…QKTR), 238–293 (NPRK…NVFS), and 329–360 (GNLD…RQQQ). 3 stretches are compositionally biased toward low complexity: residues 114 to 124 (ESQQSSQQGRQ), 132 to 148 (QQQQ…QQEQ), and 168 to 185 (QEQQ…QQFR). Ca(2+) is bound at residue Arg194. Residues 254–275 (QQGQSQPRQQGEQGRPGQHQQP) show a composition bias toward low complexity. Polar residues predominate over residues 282-293 (QEQQGNGNNVFS). Basic and acidic residues predominate over residues 339–350 (GRQEREHEERQQ). Residues 351-360 (EQLQQERQQQ) show a composition bias toward low complexity. An NGXEET; peptidase recognition motif motif is present at residues 367 to 372 (NGLEET). In terms of domain architecture, Cupin type-1 2 spans 380–529 (ENIGNPERAD…AYQISREQAR (150 aa)).

The protein belongs to the 11S seed storage protein (globulins) family. In terms of assembly, hexamer of two trimers; each subunit is composed of an acidic and a basic chain derived from a single precursor and linked by a disulfide bond. Post-translationally, proteolytically processed from a single precursor to produce an acidic and a basic chain that are linked by a disulfide bond. As to expression, expressed in seed (at protein level). Expressed in seed.

Seed storage protein. In Prunus dulcis (Almond), this protein is Prunin 1 Pru du 6.